The primary structure comprises 372 residues: Histidinol-phosphate aminotransferase (372 aa).

K234 carries the N6-(pyridoxal phosphate)lysine modification.

It belongs to the class-II pyridoxal-phosphate-dependent aminotransferase family. Histidinol-phosphate aminotransferase subfamily. In terms of assembly, homodimer. It depends on pyridoxal 5'-phosphate as a cofactor.

The enzyme catalyses L-histidinol phosphate + 2-oxoglutarate = 3-(imidazol-4-yl)-2-oxopropyl phosphate + L-glutamate. It functions in the pathway amino-acid biosynthesis; L-histidine biosynthesis; L-histidine from 5-phospho-alpha-D-ribose 1-diphosphate: step 7/9. This is Histidinol-phosphate aminotransferase (hisC) from Corynebacterium efficiens (strain DSM 44549 / YS-314 / AJ 12310 / JCM 11189 / NBRC 100395).